Reading from the N-terminus, the 910-residue chain is MQEQYQPAAIEPAAQKKWDDARIFNVSEDASKPKYYCLSMFPYPSGKLHMGHVRNYTIGDVLSRFKLLNGFNVMQPMGWDAFGMPAENAAMKNNVAPAAWTYDNIEYMKTQLKSLGFAIDWARETATCKPEYYRWEQWLFTKLFEKGIVYRKNGTVNWDPVDQTVLANEQVIDGRGWRSGALIEKREIPMYYFKITDYAEELLNDLDKLEHWPEQVKTMQRNWIGKSRGMTVRFAVSDDSKQGLEGDYAKFLQVYTTRPDTLMGATYVAVAAEHPLATAAAADKPELQAFIAECKAGSVAEADMATMEKKGVPTGRYVVNPLNGDKLEVWIANYVLWGYGDGAVMAVPAHDERDFEFAAKYSLPKKQVLQRVTIGLSPEQEEAMGFGGGSGCGAGYGDGSGSDSRDLPFMPNKWQAWYGVKDDFMVLINSGELDGMNYQTAFDAVAAKLQAIGAGEPKTQYRLRDWGISRQRYWGCPIPIVHCEQCGDVPVPADQLPVVLPENVVPDGMGSPLAKMPEFYETTCPCCGGAAKRETDTMDTFMESSWYFFRYMSPKFSDGMVDPAAAKYWGAVDQYIGGIEHAILHLLYARFFTKLMRDEGLVNVDEPFERLLTQGMVVCETYYRENDKGGKDWINPADVELTFDDKGRPVSAVLKVDGLPVVISGTEKMSKSKNNGVDPQELINAYGADTARLFMMFAAPPEQSLEWSDSGVEGAHRFLRRLWRTVYEYLKQGEAVNAFAGSQDGLSKELKDLRHKLHSTIAKVSDDYGRRQQFNTAIAAVMELLNQYDKTDTGSEQGRTVAQEVLEAAVRLLWPIVPHICETLWSELNGAKLWEAGWPAVDEAALVKSEIEVMVQVNGKLRGKITVAADASKADLEAAALATEGAVKFMEGKPAKKIIVVPGRLVNIVV.

The short motif at 42 to 52 (PYPSGKLHMGH) is the 'HIGH' region element. Positions 668-672 (KMSKS) match the 'KMSKS' region motif. Lysine 671 provides a ligand contact to ATP.

It belongs to the class-I aminoacyl-tRNA synthetase family.

It is found in the cytoplasm. It carries out the reaction tRNA(Leu) + L-leucine + ATP = L-leucyl-tRNA(Leu) + AMP + diphosphate. In Neisseria meningitidis serogroup A / serotype 4A (strain DSM 15465 / Z2491), this protein is Leucine--tRNA ligase.